The following is a 503-amino-acid chain: uncharacterized protein (503 aa).

It belongs to the Mg-chelatase subunits D/I family. ComM subfamily.

This is an uncharacterized protein from Mycobacterium bovis (strain ATCC BAA-935 / AF2122/97).